The primary structure comprises 133 residues: Meiotically up-regulated gene 15 protein (133 aa).

It localises to the cytoplasm. The protein localises to the nucleus. In terms of biological role, has a role in meiosis. The protein is Meiotically up-regulated gene 15 protein (mug15) of Schizosaccharomyces pombe (strain 972 / ATCC 24843) (Fission yeast).